The chain runs to 625 residues: Glucokinase regulatory protein (625 aa).

SIS domains follow at residues 90-286 (VQEV…QGIA) and 320-499 (VSTS…LLGK). Beta-D-fructose 1-phosphate-binding positions include 109-110 (TS), glutamate 153, and 179-181 (SVG). A beta-D-fructose 6-phosphate-binding site is contributed by 109 to 110 (TS). 179–181 (SVG) lines the beta-D-fructose 6-phosphate pocket. Residues 199 to 200 (AV) form an important for interaction with GCK region. Glutamate 348 contacts beta-D-fructose 1-phosphate. The tract at residues 463 to 465 (LLF) is essential for interaction with GCK. Lysine 514 is a beta-D-fructose 1-phosphate binding site. Residue lysine 514 coordinates beta-D-fructose 6-phosphate.

This sequence belongs to the GCKR family. As to quaternary structure, interacts (fructose 6-phosphate bound form) with GCK. Found in liver and pancreas. Not detected in muscle, brain, heart, thymus, intestine, uterus, adipose tissue, kidney, adrenal, lung or spleen.

The protein localises to the cytoplasm. The protein resides in the nucleus. It localises to the mitochondrion. Its function is as follows. Regulates glucokinase (GCK) by forming an inactive complex with this enzyme. Acts by promoting GCK recruitment to the nucleus, possibly to provide a reserve of GCK that can be quickly released in the cytoplasm after a meal. The affinity of GCKR for GCK is modulated by fructose metabolites: GCKR with bound fructose 6-phosphate has increased affinity for GCK, while GCKR with bound fructose 1-phosphate has strongly decreased affinity for GCK and does not inhibit GCK activity. In Homo sapiens (Human), this protein is Glucokinase regulatory protein.